The chain runs to 311 residues: GTP cyclohydrolase FolE2 (311 aa).

The protein belongs to the GTP cyclohydrolase IV family.

The catalysed reaction is GTP + H2O = 7,8-dihydroneopterin 3'-triphosphate + formate + H(+). The protein operates within cofactor biosynthesis; 7,8-dihydroneopterin triphosphate biosynthesis; 7,8-dihydroneopterin triphosphate from GTP: step 1/1. In terms of biological role, converts GTP to 7,8-dihydroneopterin triphosphate. The sequence is that of GTP cyclohydrolase FolE2 from Xanthomonas campestris pv. campestris (strain B100).